A 314-amino-acid polypeptide reads, in one-letter code: DegV domain-containing protein XCC3382 (314 aa).

The DegV domain occupies 3–307 (IGIVVDSACD…KGALAVAFAA (305 aa)). 2 residues coordinate hexadecanoate: threonine 63 and serine 96.

Functionally, may bind long-chain fatty acids, such as palmitate, and may play a role in lipid transport or fatty acid metabolism. This Xanthomonas campestris pv. campestris (strain ATCC 33913 / DSM 3586 / NCPPB 528 / LMG 568 / P 25) protein is DegV domain-containing protein XCC3382.